We begin with the raw amino-acid sequence, 229 residues long: Protein OPG034 (229 aa).

It belongs to the orthopoxvirus OPG034 family.

The polypeptide is Protein OPG034 (OPG034) (Vaccinia virus (strain Western Reserve) (VACV)).